A 394-amino-acid polypeptide reads, in one-letter code: 3-dehydroquinate synthase (394 aa).

NAD(+)-binding positions include 112 to 116, 136 to 137, K149, K158, and 176 to 179; these read GVIGD, TT, and TLAT. Residues E191, H254, and H276 each contribute to the Zn(2+) site. Over residues 371–388 the composition is skewed to polar residues; that stretch reads STNQHTTYSPHQHATTKP. Residues 371-394 are disordered; the sequence is STNQHTTYSPHQHATTKPPNRRPH.

This sequence belongs to the sugar phosphate cyclases superfamily. Dehydroquinate synthase family. The cofactor is NAD(+). Requires Co(2+) as cofactor. It depends on Zn(2+) as a cofactor.

The protein resides in the cytoplasm. The catalysed reaction is 7-phospho-2-dehydro-3-deoxy-D-arabino-heptonate = 3-dehydroquinate + phosphate. Its pathway is metabolic intermediate biosynthesis; chorismate biosynthesis; chorismate from D-erythrose 4-phosphate and phosphoenolpyruvate: step 2/7. In terms of biological role, catalyzes the conversion of 3-deoxy-D-arabino-heptulosonate 7-phosphate (DAHP) to dehydroquinate (DHQ). The polypeptide is 3-dehydroquinate synthase (Xylella fastidiosa (strain 9a5c)).